The sequence spans 121 residues: Small ribosomal subunit protein uS13 (121 aa).

Residues 92-121 (KRGLPVRGQRTRTNARTRKGPRRAAASLKK) form a disordered region.

Belongs to the universal ribosomal protein uS13 family. In terms of assembly, part of the 30S ribosomal subunit. Forms a loose heterodimer with protein S19. Forms two bridges to the 50S subunit in the 70S ribosome.

Its function is as follows. Located at the top of the head of the 30S subunit, it contacts several helices of the 16S rRNA. In the 70S ribosome it contacts the 23S rRNA (bridge B1a) and protein L5 of the 50S subunit (bridge B1b), connecting the 2 subunits; these bridges are implicated in subunit movement. Contacts the tRNAs in the A and P-sites. In Bordetella bronchiseptica (strain ATCC BAA-588 / NCTC 13252 / RB50) (Alcaligenes bronchisepticus), this protein is Small ribosomal subunit protein uS13.